Here is a 278-residue protein sequence, read N- to C-terminus: Undecaprenyl-diphosphatase (278 aa).

The next 8 helical transmembrane spans lie at 14–34, 40–60, 89–109, 121–141, 153–173, 196–216, 227–247, and 257–277; these read GTTEFLPISSSAHLIVLPWLF, GLAFNVALHLGTLSAVLAYFW, WAVIIGSLPAGLAGFFLNDVI, TAIVFTSLLLIVLGFVLWLAE, LGLRDGLVVGLAQALALLPGV, FSFILGIPAIAGAGLLETLKL, VLFVTGVASAAITGFLAIAFL, and SIFIVYRIALGLVLLLVVSFA.

The protein belongs to the UppP family.

The protein resides in the cell membrane. The enzyme catalyses di-trans,octa-cis-undecaprenyl diphosphate + H2O = di-trans,octa-cis-undecaprenyl phosphate + phosphate + H(+). Catalyzes the dephosphorylation of undecaprenyl diphosphate (UPP). Confers resistance to bacitracin. This chain is Undecaprenyl-diphosphatase, found in Thermomicrobium roseum (strain ATCC 27502 / DSM 5159 / P-2).